The chain runs to 960 residues: Lon protease homolog, mitochondrial (960 aa).

Residues 1–56 (MYRAGALVLRSATLRRTRFLAAHQNFATISSQRSSVLLAKSLESSIGGAGNQKKFY) constitute a mitochondrion transit peptide. The Lon N-terminal domain occupies 92–352 (VPILAINRYP…IALLLIQKEK (261 aa)). Residues 195–250 (PKTDTPLNGRRARGKRAGLPPTPPPTPPLSTPTSAPEASATSPEEKEEKKDPERKG) form a disordered region. Residues 214–224 (PPTPPPTPPLS) are compositionally biased toward pro residues. Positions 225–236 (TPTSAPEASATS) are enriched in low complexity. Residues 237–250 (PEEKEEKKDPERKG) are compositionally biased toward basic and acidic residues. Residue 505–512 (GPPGVGKT) coordinates ATP. The tract at residues 712-748 (EQQPEDEQPAATTAISENSDAEPVSTPSDPPTFTPEK) is disordered. The Lon proteolytic domain occupies 773–960 (VTPPGVIMGL…YDELYEHLFQ (188 aa)). Active-site residues include Ser-867 and Lys-910.

Belongs to the peptidase S16 family. In terms of assembly, homohexamer or homoheptamer. Organized in a ring with a central cavity.

It is found in the mitochondrion matrix. The enzyme catalyses Hydrolysis of proteins in presence of ATP.. ATP-dependent serine protease that mediates the selective degradation of misfolded, unassembled or oxidatively damaged polypeptides as well as certain short-lived regulatory proteins in the mitochondrial matrix. May also have a chaperone function in the assembly of inner membrane protein complexes. Participates in the regulation of mitochondrial gene expression and in the maintenance of the integrity of the mitochondrial genome. Binds to mitochondrial DNA in a site-specific manner. In Caenorhabditis briggsae, this protein is Lon protease homolog, mitochondrial.